A 157-amino-acid chain; its full sequence is Small ribosomal subunit protein uS7 (157 aa).

Belongs to the universal ribosomal protein uS7 family. As to quaternary structure, part of the 30S ribosomal subunit. Contacts proteins S9 and S11.

Its function is as follows. One of the primary rRNA binding proteins, it binds directly to 16S rRNA where it nucleates assembly of the head domain of the 30S subunit. Is located at the subunit interface close to the decoding center, probably blocks exit of the E-site tRNA. In Psychrobacter sp. (strain PRwf-1), this protein is Small ribosomal subunit protein uS7.